Reading from the N-terminus, the 745-residue chain is uncharacterized protein (745 aa).

Positions 158–256 (NQVCDYIELH…HQTPKQYRGD (99 aa)) constitute an HTH araC/xylS-type domain. DNA-binding regions (H-T-H motif) lie at residues 175 to 196 (SELS…AESL) and 223 to 246 (ITDI…KHFT).

This is an uncharacterized protein from Staphylococcus aureus (strain MRSA252).